Consider the following 326-residue polypeptide: N-acetyl-gamma-glutamyl-phosphate reductase (326 aa).

Residue cysteine 155 is part of the active site.

The protein belongs to the NAGSA dehydrogenase family. Type 1 subfamily.

The protein localises to the cytoplasm. It catalyses the reaction N-acetyl-L-glutamate 5-semialdehyde + phosphate + NADP(+) = N-acetyl-L-glutamyl 5-phosphate + NADPH + H(+). It functions in the pathway amino-acid biosynthesis; L-arginine biosynthesis; N(2)-acetyl-L-ornithine from L-glutamate: step 3/4. Functionally, catalyzes the NADPH-dependent reduction of N-acetyl-5-glutamyl phosphate to yield N-acetyl-L-glutamate 5-semialdehyde. The polypeptide is N-acetyl-gamma-glutamyl-phosphate reductase (Shewanella sediminis (strain HAW-EB3)).